Consider the following 59-residue polypeptide: Potassium channel toxin alpha-KTx 16.4 (59 aa).

Positions 1–22 are cleaved as a signal peptide; sequence MKILSIVLIALIICSISICTEA. Cystine bridges form between Cys-30/Cys-51, Cys-36/Cys-56, and Cys-40/Cys-58.

This sequence belongs to the short scorpion toxin superfamily. Potassium channel inhibitor family. Alpha-KTx 16 subfamily. Expressed by the venom gland.

The protein resides in the secreted. Weak inhibitor of voltage-gated potassium channel hKv1.3/KCNA3. In Mesobuthus eupeus (Lesser Asian scorpion), this protein is Potassium channel toxin alpha-KTx 16.4.